The chain runs to 289 residues: Glucanase inhibitor protein 2 (289 aa).

Residues 1–19 form the signal peptide; sequence MKVTATIAAASMAIAAASA. Residues 29–257 enclose the Peptidase S1 domain; the sequence is ILGGSIIPSG…ALKWVNPIIK (229 aa). A disulfide bridge links Cys56 with Cys72. N-linked (GlcNAc...) asparagine glycosylation is found at Asn89, Asn104, and Asn109. Disulfide bonds link Cys180–Cys192 and Cys202–Cys233.

Belongs to the peptidase S1 family.

The protein resides in the secreted. Its function is as follows. Secreted effector that suppresses host plant glucan elicitor-mediated defense responses. Targets host endoglucanases and inhibits the endoglucanase-mediated release of elicitor-active glucan oligosaccharides from P.sojae cell walls. The chain is Glucanase inhibitor protein 2 from Phytophthora sojae (Soybean stem and root rot agent).